Reading from the N-terminus, the 288-residue chain is MNNIIDGKALANEILADLKLEIQELISQTNASPKLAIVLVGDNPASIIYVRNKIKNAHKIGIYTLLVNLSTTIHTNDLISKINELNLDNKISGIIVQLPLPSSIDKNKILSAVSPSKDIDGFHPLNVGYLHSGISQNFIPCTALGCLAVIKKYEPNLTGKNVVIIGRSNIVGKPLSALLLKENCSVTICHSKTHNLSSITSKTDIVVAAIGSPLKLTAEYFNPESIVIDVGINRISGNKIIGDVDFENVQSKVKYITPVPGGIGPMTIAFLLKNTVKAFKDSLYTLDK.

Residues 166 to 168 (GRS), Ser191, and Ile232 each bind NADP(+).

It belongs to the tetrahydrofolate dehydrogenase/cyclohydrolase family. In terms of assembly, homodimer.

It catalyses the reaction (6R)-5,10-methylene-5,6,7,8-tetrahydrofolate + NADP(+) = (6R)-5,10-methenyltetrahydrofolate + NADPH. The catalysed reaction is (6R)-5,10-methenyltetrahydrofolate + H2O = (6R)-10-formyltetrahydrofolate + H(+). The protein operates within one-carbon metabolism; tetrahydrofolate interconversion. Functionally, catalyzes the oxidation of 5,10-methylenetetrahydrofolate to 5,10-methenyltetrahydrofolate and then the hydrolysis of 5,10-methenyltetrahydrofolate to 10-formyltetrahydrofolate. This is Bifunctional protein FolD from Rickettsia massiliae (strain Mtu5).